Reading from the N-terminus, the 101-residue chain is Phosphoribosyl-AMP cyclohydrolase (101 aa).

Position 71 (Asp71) interacts with Mg(2+). Cys72 is a binding site for Zn(2+). Residues Asp73 and Asp75 each coordinate Mg(2+). Zn(2+) contacts are provided by Cys88 and Cys95.

It belongs to the PRA-CH family. As to quaternary structure, homodimer. The cofactor is Mg(2+). Requires Zn(2+) as cofactor.

It localises to the cytoplasm. The catalysed reaction is 1-(5-phospho-beta-D-ribosyl)-5'-AMP + H2O = 1-(5-phospho-beta-D-ribosyl)-5-[(5-phospho-beta-D-ribosylamino)methylideneamino]imidazole-4-carboxamide. Its pathway is amino-acid biosynthesis; L-histidine biosynthesis; L-histidine from 5-phospho-alpha-D-ribose 1-diphosphate: step 3/9. Functionally, catalyzes the hydrolysis of the adenine ring of phosphoribosyl-AMP. This is Phosphoribosyl-AMP cyclohydrolase from Bacillus cereus (strain B4264).